The primary structure comprises 446 residues: Inhibitor of Apoptosis OPG037 (446 aa).

6 ANK repeats span residues 71 to 100 (DGNY…DPNA), 104 to 135 (QHKT…KINN), 207 to 237 (DGNT…DVNK), 241 to 271 (FGDS…VITD), 296 to 325 (YDST…ICED), and 327 to 351 (MYYA…SVDS).

This sequence belongs to the orthopoxvirus OPG037 protein family. In terms of assembly, may interact with host caspase-9-Apaf-1 complex.

The protein localises to the host cytoplasm. Inhibits host apoptosis. Acts by associating with host apoptosome. This chain is Inhibitor of Apoptosis OPG037 (OPG037), found in Variola virus (isolate Human/India/Ind3/1967) (VARV).